Consider the following 351-residue polypeptide: Auxin-responsive protein IAA27 (351 aa).

The tract at residues 1 to 37 is disordered; it reads MMNLISFETPPLGRRSQDGGSSSSSITAATTTTNKAK. Residues 21-34 show a composition bias toward low complexity; the sequence is SSSSSITAATTTTN. The region spanning 233 to 327 is the PB1 domain; it reads NMFAKVHMDG…SAKRLYIAKN (95 aa).

It belongs to the Aux/IAA family. As to quaternary structure, homodimers and heterodimers. In terms of tissue distribution, expressed in roots and seedlings.

The protein resides in the nucleus. Aux/IAA proteins are short-lived transcriptional factors that function as repressors of early auxin response genes at low auxin concentrations. In Oryza sativa subsp. japonica (Rice), this protein is Auxin-responsive protein IAA27 (IAA27).